A 208-amino-acid chain; its full sequence is Anthranilate synthase component 2 (208 aa).

Residues 3–208 form the Glutamine amidotransferase type-1 domain; it reads HVVLIDNHDS…SRCVEQLLAN (206 aa). An L-glutamine-binding site is contributed by 53-55; sequence GPG. Residue C80 is the Nucleophile; for GATase activity of the active site. Residues Q84 and 145–146 contribute to the L-glutamine site; that span reads SL. Catalysis depends on for GATase activity residues H185 and E187.

As to quaternary structure, heterotetramer consisting of two non-identical subunits: a beta subunit (TrpG) and a large alpha subunit (TrpE).

It carries out the reaction chorismate + L-glutamine = anthranilate + pyruvate + L-glutamate + H(+). It functions in the pathway amino-acid biosynthesis; L-tryptophan biosynthesis; L-tryptophan from chorismate: step 1/5. Its function is as follows. Part of a heterotetrameric complex that catalyzes the two-step biosynthesis of anthranilate, an intermediate in the biosynthesis of L-tryptophan. In the first step, the glutamine-binding beta subunit (TrpG) of anthranilate synthase (AS) provides the glutamine amidotransferase activity which generates ammonia as a substrate that, along with chorismate, is used in the second step, catalyzed by the large alpha subunit of AS (TrpE) to produce anthranilate. In the absence of TrpG, TrpE can synthesize anthranilate directly from chorismate and high concentrations of ammonia. The polypeptide is Anthranilate synthase component 2 (trpG) (Corynebacterium glutamicum (strain ATCC 13032 / DSM 20300 / JCM 1318 / BCRC 11384 / CCUG 27702 / LMG 3730 / NBRC 12168 / NCIMB 10025 / NRRL B-2784 / 534)).